Consider the following 372-residue polypeptide: MALKFHLIHQSKKSQARVGQIETSHGVIDTPAFVPVATHGALKGVIDHSDIPLLFCNTYHLLLHPGPEAVAKLGGLHQFMGRQAPIITDSGGFQIFSLAYGSVAEEIKSCGKKKGMSSLVKITDEGAWFKSYRDGRKLFLSPELSVQAQKDLGADIIIPLDELLPFHTDQEYFLTSCSRTYVWEKRSLEYHRKDPRHQSMYGVIHGGLDPEQRRIGVRFVEDEPFDGSAIGGSLGRNLQEMSEVVKITTSFLSKERPVHLLGIGDLPSIYAMVGFGIDSFDSSYPTKAARHGLILSKAGPIKIGQQKYSQDSSTIDPSCSCLTCLSGISRAYLRHLFKVREPNAAIWASIHNLHHMQQVMKEIREAILKDEI.

Asp-89 acts as the Proton acceptor in catalysis. Residues 89–93, Asp-161, and Gly-232 each bind substrate; that span reads DSGGF. The interval 262-268 is RNA binding; sequence GIGDLPS. Asp-281 (nucleophile) is an active-site residue. The RNA binding; important for wobble base 34 recognition stretch occupies residues 286 to 290; that stretch reads TKAAR. Zn(2+) is bound by residues Cys-319, Cys-321, Cys-324, and His-351.

This sequence belongs to the queuine tRNA-ribosyltransferase family. In terms of assembly, homodimer. Within each dimer, one monomer is responsible for RNA recognition and catalysis, while the other monomer binds to the replacement base PreQ1. Requires Zn(2+) as cofactor.

The enzyme catalyses 7-aminomethyl-7-carbaguanine + guanosine(34) in tRNA = 7-aminomethyl-7-carbaguanosine(34) in tRNA + guanine. Its pathway is tRNA modification; tRNA-queuosine biosynthesis. Its function is as follows. Catalyzes the base-exchange of a guanine (G) residue with the queuine precursor 7-aminomethyl-7-deazaguanine (PreQ1) at position 34 (anticodon wobble position) in tRNAs with GU(N) anticodons (tRNA-Asp, -Asn, -His and -Tyr). Catalysis occurs through a double-displacement mechanism. The nucleophile active site attacks the C1' of nucleotide 34 to detach the guanine base from the RNA, forming a covalent enzyme-RNA intermediate. The proton acceptor active site deprotonates the incoming PreQ1, allowing a nucleophilic attack on the C1' of the ribose to form the product. After dissociation, two additional enzymatic reactions on the tRNA convert PreQ1 to queuine (Q), resulting in the hypermodified nucleoside queuosine (7-(((4,5-cis-dihydroxy-2-cyclopenten-1-yl)amino)methyl)-7-deazaguanosine). This is Queuine tRNA-ribosyltransferase from Chlamydia pneumoniae (Chlamydophila pneumoniae).